A 1937-amino-acid polypeptide reads, in one-letter code: Collagen-like protein 7 (1937 aa).

N-linked (GlcNAc...) asparagine; by host glycosylation is found at Asn6 and Asn21. 4 disordered regions span residues 88-248, 294-531, 583-643, and 670-1144; these read CKGN…KGDK, NLKG…PDLG, LKGD…NQGV, and IKGD…DTAT. Collagen-like domains follow at residues 102 to 161, 168 to 227, 297 to 356, 363 to 422, and 453 to 512; these read GPKG…KGEK, GEKG…KGDI, GEKG…KGEK, GDKG…IGEK, and GDKG…KGDK. Positions 296-514 are enriched in basic and acidic residues; that stretch reads KGEKGDKGNK…DKGDKGDKGD (219 aa). The N-linked (GlcNAc...) asparagine; by host glycan is linked to Asn515. 3 stretches are compositionally biased toward basic and acidic residues: residues 584-605, 614-625, and 670-899; these read KGDKGDKGINGNKGDKGEKGDK, KGEKGDKGDKGD, and IKGD…KGDK. 5 consecutive Collagen-like domains span residues 672-731, 735-854, 867-926, 936-995, and 1023-1142; these read GDKG…KGDK, GNKG…KGNI, GLKG…KGDK, GIKG…KGDK, and GSKG…KGDT. The N-linked (GlcNAc...) asparagine; by host glycan is linked to Asn902. Basic and acidic residues predominate over residues 907–1141; sequence YKGDKGDKGS…DKGDKGDKGD (235 aa). Residues Asn1178, Asn1192, Asn1212, Asn1217, Asn1245, Asn1246, Asn1255, Asn1317, Asn1422, Asn1427, Asn1432, Asn1443, Asn1452, Asn1477, Asn1494, Asn1506, Asn1513, Asn1533, Asn1598, Asn1619, Asn1620, Asn1632, Asn1641, Asn1663, Asn1664, Asn1672, Asn1682, Asn1683, Asn1732, Asn1735, Asn1746, Asn1756, Asn1784, Asn1842, and Asn1934 are each glycosylated (N-linked (GlcNAc...) asparagine; by host).

May be hydroxylated on lysine by the viral-encoded procollagen-lysine,2-oxoglutarate 5-dioxygenase.

Its subcellular location is the virion. Functionally, may participate in the formation of a layer of cross-linked glycosylated fibrils at the viral surface thus giving it a hairy-like appearance. The chain is Collagen-like protein 7 from Acanthamoeba polyphaga mimivirus (APMV).